A 360-amino-acid chain; its full sequence is G-protein coupled receptor 15 (360 aa).

The Extracellular segment spans residues 1–33; sequence MDPEETSVYLDYYYATSPNPDIRETHSHVPYTS. The helical transmembrane segment at 34–54 threads the bilayer; sequence VFLPVFYTAVFLTGVLGNLVL. The Cytoplasmic portion of the chain corresponds to 55-69; the sequence is MGALHFKPGSRRLID. Residues 70-90 form a helical membrane-spanning segment; that stretch reads IFIINLAASDFIFLVTLPLWV. Residues 91–120 lie on the Extracellular side of the membrane; the sequence is DKEASLGLWRTGSFLCKGSSYMISVNMHCS. A helical membrane pass occupies residues 121 to 141; that stretch reads VFLLTCMSVDRYLAIVCPVVS. Topologically, residues 142–149 are cytoplasmic; it reads RKFRRTDC. The helical transmembrane segment at 150-170 threads the bilayer; it reads AYVVCASIWFISCLLGLPTLL. Residues 171–192 lie on the Extracellular side of the membrane; it reads SRELTLIDDKPYCAEKKATPLK. Residues 193 to 213 form a helical membrane-spanning segment; it reads LIWSLVALIFTFFVPLLSIVT. The Cytoplasmic segment spans residues 214–239; that stretch reads CYCCIARKLCAHYQQSGKHNKKLKKS. A helical membrane pass occupies residues 240–260; the sequence is IKIIFIVVAAFLVSWLPFNTS. Topologically, residues 261-284 are extracellular; sequence KLLAIVSGLQQERYFPSAILQLGM. A helical membrane pass occupies residues 285-305; sequence EVSGPLAFANSCVNPFIYYIF. The Cytoplasmic segment spans residues 306 to 360; it reads DSYIRRAIVHCLCPCLKNYDFGSSTETSDSHLTKALSTFIHAEDFTRRRKRSVSL. Serine 359 is subject to Phosphoserine.

Belongs to the G-protein coupled receptor 1 family. As to quaternary structure, interacts with adapter YWHAE; this interaction promotes ER-to-Golgi transport of GPR15. Post-translationally, phosphorylation is necessary for YWHAE binding and efficient surface expression. In terms of processing, O-glycosylated. Sialylated O-glycans in the N-terminal tail inhibits binding of GPR15LG. Sulfation is required for efficient binding of GPR15LG.

The protein resides in the cell membrane. Its function is as follows. G protein-coupled receptor that plays an important role in immune homeostasis. Acts via its natural ligand GPR15LG, a chemokine-like polypeptide strongly expressed in gastrointestinal tissues. GPR15-GPR15LG signaling axis regulates intestinal homeostasis and inflammation through the migration of immune cells. Controls thereby the specific homing of T-cells, particularly FOXP3+ regulatory T-cells (Tregs), to the large intestine lamina propria. Also required for skin localization of thymus-derived dendritic epidermal T-cells. Plays an important role in mediating cytoprotective function as well as angiogenesis of thrombomodulin. Mechanistically, preferentially signals through the Gi/o pathway to inhibit adenylate cyclase activity and activate a phosphatidylinositol-calcium second messenger system that regulates the release of Ca(2+) ions from intracellular stores. This Macaca nemestrina (Pig-tailed macaque) protein is G-protein coupled receptor 15 (GPR15).